A 505-amino-acid chain; its full sequence is MEFFQRYIELDRSWQHNFFYPLIFQEYIYGFAYDHGLNKSILLENADDKKYSLLIVKRLITRMYQQNHLILAANNSNQNDFLGHKHKKNLYYQMISEGFAVIVEIPFSLLLISSLEGKEKKIVKSHNLRSIHSVFPFFEDKFLHLNYVLEILIPYPIHLEILVQTLRYWVKDASALHLLRFFLYCNSLITPSKSISIFSKRNQRLFLFLYNFHVCEYESIFVFLCNQSSHLRSTSFGDLLQRIYFYGKLEYLVKVKTFTKDFRIILWLFKDPFLHYVRYRGKSILASKGTSLLMHKWKYYLIHFWQCHFSLWSQPRRIYINRLSKHSLDFMGFFSSVRLNSSVVRSQMVENAFLIDNTIKKFDTIIRIIPLVGSLAKAKFCNVLGHPISKSVWADLLDSDIIDRFGRICRNLSHYYSGSSRKKSLYRIKYILRLSCARTLARKHKSTVRAFLKTLGSEFLEEFFTEEEKVLSLILPRDSSISRGLYRGPIWYLDIICIHDLANDD.

Belongs to the intron maturase 2 family. MatK subfamily.

Its subcellular location is the plastid. The protein localises to the chloroplast. In terms of biological role, usually encoded in the trnK tRNA gene intron. Probably assists in splicing its own and other chloroplast group II introns. The sequence is that of Maturase K from Portulacaria afra (Elephant's food).